The sequence spans 439 residues: Methylenetetrahydrofolate--tRNA-(uracil-5-)-methyltransferase TrmFO (439 aa).

Residue 9 to 14 coordinates FAD; that stretch reads GAGLAG.

It belongs to the MnmG family. TrmFO subfamily. Requires FAD as cofactor.

It is found in the cytoplasm. The catalysed reaction is uridine(54) in tRNA + (6R)-5,10-methylene-5,6,7,8-tetrahydrofolate + NADH + H(+) = 5-methyluridine(54) in tRNA + (6S)-5,6,7,8-tetrahydrofolate + NAD(+). It catalyses the reaction uridine(54) in tRNA + (6R)-5,10-methylene-5,6,7,8-tetrahydrofolate + NADPH + H(+) = 5-methyluridine(54) in tRNA + (6S)-5,6,7,8-tetrahydrofolate + NADP(+). Its function is as follows. Catalyzes the folate-dependent formation of 5-methyl-uridine at position 54 (M-5-U54) in all tRNAs. The protein is Methylenetetrahydrofolate--tRNA-(uracil-5-)-methyltransferase TrmFO of Desulforudis audaxviator (strain MP104C).